Here is a 200-residue protein sequence, read N- to C-terminus: Holliday junction resolvase RecU (200 aa).

Residues T82, D84, E97, and Q116 each contribute to the Mg(2+) site.

This sequence belongs to the RecU family. Requires Mg(2+) as cofactor.

It localises to the cytoplasm. It carries out the reaction Endonucleolytic cleavage at a junction such as a reciprocal single-stranded crossover between two homologous DNA duplexes (Holliday junction).. Its function is as follows. Endonuclease that resolves Holliday junction intermediates in genetic recombination. Cleaves mobile four-strand junctions by introducing symmetrical nicks in paired strands. Promotes annealing of linear ssDNA with homologous dsDNA. Required for DNA repair, homologous recombination and chromosome segregation. In Streptococcus gordonii (strain Challis / ATCC 35105 / BCRC 15272 / CH1 / DL1 / V288), this protein is Holliday junction resolvase RecU.